We begin with the raw amino-acid sequence, 372 residues long: Chaperone protein DnaJ (372 aa).

Positions 5-69 constitute a J domain; that stretch reads DYYEVLGVSK…DKRKQYDQFG (65 aa). The CR-type zinc finger occupies 139–221; that stretch reads GVDKIIELDL…CKGKGKYLER (83 aa). Residues cysteine 152, cysteine 155, cysteine 169, cysteine 172, cysteine 195, cysteine 198, cysteine 209, and cysteine 212 each coordinate Zn(2+). 4 CXXCXGXG motif repeats span residues 152 to 159, 169 to 176, 195 to 202, and 209 to 216; these read CSACFGSG, CNNCHGTG, CNVCNGAG, and CKNCKGKG.

Belongs to the DnaJ family. As to quaternary structure, homodimer. Requires Zn(2+) as cofactor.

The protein resides in the cytoplasm. In terms of biological role, participates actively in the response to hyperosmotic and heat shock by preventing the aggregation of stress-denatured proteins and by disaggregating proteins, also in an autonomous, DnaK-independent fashion. Unfolded proteins bind initially to DnaJ; upon interaction with the DnaJ-bound protein, DnaK hydrolyzes its bound ATP, resulting in the formation of a stable complex. GrpE releases ADP from DnaK; ATP binding to DnaK triggers the release of the substrate protein, thus completing the reaction cycle. Several rounds of ATP-dependent interactions between DnaJ, DnaK and GrpE are required for fully efficient folding. Also involved, together with DnaK and GrpE, in the DNA replication of plasmids through activation of initiation proteins. This chain is Chaperone protein DnaJ, found in Mycoplasma capricolum subsp. capricolum (strain California kid / ATCC 27343 / NCTC 10154).